The following is a 122-amino-acid chain: Large ribosomal subunit protein uL14 (122 aa).

This sequence belongs to the universal ribosomal protein uL14 family. As to quaternary structure, part of the 50S ribosomal subunit. Forms a cluster with proteins L3 and L19. In the 70S ribosome, L14 and L19 interact and together make contacts with the 16S rRNA in bridges B5 and B8.

Functionally, binds to 23S rRNA. Forms part of two intersubunit bridges in the 70S ribosome. This is Large ribosomal subunit protein uL14 from Streptococcus gordonii (strain Challis / ATCC 35105 / BCRC 15272 / CH1 / DL1 / V288).